Consider the following 65-residue polypeptide: Large ribosomal subunit protein bL32 (65 aa).

Residues methionine 1–serine 18 show a composition bias toward basic residues. Residues methionine 1–tyrosine 20 form a disordered region.

It belongs to the bacterial ribosomal protein bL32 family.

This is Large ribosomal subunit protein bL32 from Salinibacter ruber (strain DSM 13855 / M31).